The following is an 809-amino-acid chain: Leucine--tRNA ligase (809 aa).

A 'HIGH' region motif is present at residues P40–H51. Positions K581–S585 match the 'KMSKS' region motif. Residue K584 participates in ATP binding.

This sequence belongs to the class-I aminoacyl-tRNA synthetase family.

It localises to the cytoplasm. The catalysed reaction is tRNA(Leu) + L-leucine + ATP = L-leucyl-tRNA(Leu) + AMP + diphosphate. This is Leucine--tRNA ligase from Levilactobacillus brevis (strain ATCC 367 / BCRC 12310 / CIP 105137 / JCM 1170 / LMG 11437 / NCIMB 947 / NCTC 947) (Lactobacillus brevis).